The sequence spans 198 residues: Pyridoxal 5'-phosphate synthase subunit PdxT (198 aa).

49–51 (GES) contacts L-glutamine. Cys81 acts as the Nucleophile in catalysis. Residues Arg113 and 141 to 142 (IR) contribute to the L-glutamine site. Residues His177 and Glu179 each act as charge relay system in the active site.

The protein belongs to the glutaminase PdxT/SNO family. As to quaternary structure, in the presence of PdxS, forms a dodecamer of heterodimers. Only shows activity in the heterodimer.

It carries out the reaction aldehydo-D-ribose 5-phosphate + D-glyceraldehyde 3-phosphate + L-glutamine = pyridoxal 5'-phosphate + L-glutamate + phosphate + 3 H2O + H(+). It catalyses the reaction L-glutamine + H2O = L-glutamate + NH4(+). The protein operates within cofactor biosynthesis; pyridoxal 5'-phosphate biosynthesis. Functionally, catalyzes the hydrolysis of glutamine to glutamate and ammonia as part of the biosynthesis of pyridoxal 5'-phosphate. The resulting ammonia molecule is channeled to the active site of PdxS. In Mycobacterium leprae (strain TN), this protein is Pyridoxal 5'-phosphate synthase subunit PdxT.